A 67-amino-acid polypeptide reads, in one-letter code: ATP synthase F(0) complex subunit 8 (67 aa).

Residues 8-24 form a helical membrane-spanning segment; it reads TWSITIMSMIMTLFIVF. Position 54 is an N6-acetyllysine; alternate (lysine 54). Lysine 54 is subject to N6-succinyllysine; alternate. Lysine 57 carries the post-translational modification N6-acetyllysine.

Belongs to the ATPase protein 8 family. In terms of assembly, component of the ATP synthase complex composed at least of ATP5F1A/subunit alpha, ATP5F1B/subunit beta, ATP5MC1/subunit c (homooctomer), MT-ATP6/subunit a, MT-ATP8/subunit 8, ATP5ME/subunit e, ATP5MF/subunit f, ATP5MG/subunit g, ATP5MK/subunit k, ATP5MJ/subunit j, ATP5F1C/subunit gamma, ATP5F1D/subunit delta, ATP5F1E/subunit epsilon, ATP5PF/subunit F6, ATP5PB/subunit b, ATP5PD/subunit d, ATP5PO/subunit OSCP. ATP synthase complex consists of a soluble F(1) head domain (subunits alpha(3) and beta(3)) - the catalytic core - and a membrane F(0) domain - the membrane proton channel (subunits c, a, 8, e, f, g, k and j). These two domains are linked by a central stalk (subunits gamma, delta, and epsilon) rotating inside the F1 region and a stationary peripheral stalk (subunits F6, b, d, and OSCP). Interacts with PRICKLE3.

Its subcellular location is the mitochondrion membrane. Functionally, subunit 8, of the mitochondrial membrane ATP synthase complex (F(1)F(0) ATP synthase or Complex V) that produces ATP from ADP in the presence of a proton gradient across the membrane which is generated by electron transport complexes of the respiratory chain. ATP synthase complex consist of a soluble F(1) head domain - the catalytic core - and a membrane F(1) domain - the membrane proton channel. These two domains are linked by a central stalk rotating inside the F(1) region and a stationary peripheral stalk. During catalysis, ATP synthesis in the catalytic domain of F(1) is coupled via a rotary mechanism of the central stalk subunits to proton translocation. In vivo, can only synthesize ATP although its ATP hydrolase activity can be activated artificially in vitro. Part of the complex F(0) domain. The sequence is that of ATP synthase F(0) complex subunit 8 from Felis catus (Cat).